A 416-amino-acid polypeptide reads, in one-letter code: 5-methylthioadenosine/S-adenosylhomocysteine deaminase 2 (416 aa).

2 residues coordinate Zn(2+): His-58 and His-60. Residues Glu-86 and His-178 each coordinate substrate. His-205 provides a ligand contact to Zn(2+). Positions 208 and 293 each coordinate substrate. Asp-293 provides a ligand contact to Zn(2+).

This sequence belongs to the metallo-dependent hydrolases superfamily. MTA/SAH deaminase family. Zn(2+) serves as cofactor.

It catalyses the reaction S-adenosyl-L-homocysteine + H2O + H(+) = S-inosyl-L-homocysteine + NH4(+). The enzyme catalyses S-methyl-5'-thioadenosine + H2O + H(+) = S-methyl-5'-thioinosine + NH4(+). Functionally, catalyzes the deamination of 5-methylthioadenosine and S-adenosyl-L-homocysteine into 5-methylthioinosine and S-inosyl-L-homocysteine, respectively. Is also able to deaminate adenosine. The protein is 5-methylthioadenosine/S-adenosylhomocysteine deaminase 2 of Archaeoglobus fulgidus (strain ATCC 49558 / DSM 4304 / JCM 9628 / NBRC 100126 / VC-16).